Here is a 292-residue protein sequence, read N- to C-terminus: tRNA (guanine-N(7)-)-methyltransferase (292 aa).

Residues 1 to 52 (MGKIEATSKEEKLRVQKEAEARRRAYRDLKKEARQMQKEVKFDTDDNSELPK) form a disordered region. S-adenosyl-L-methionine-binding positions include Gly-106, 129 to 130 (EI), 166 to 167 (NA), and Cys-186. The active site involves Asp-189. Residue 264–266 (TEE) coordinates S-adenosyl-L-methionine.

It belongs to the class I-like SAM-binding methyltransferase superfamily. TrmB family. In terms of assembly, forms a complex with TRM82.

It localises to the nucleus. It catalyses the reaction guanosine(46) in tRNA + S-adenosyl-L-methionine = N(7)-methylguanosine(46) in tRNA + S-adenosyl-L-homocysteine. Its pathway is tRNA modification; N(7)-methylguanine-tRNA biosynthesis. In terms of biological role, catalyzes the formation of N(7)-methylguanine at position 46 (m7G46) in tRNA. The sequence is that of tRNA (guanine-N(7)-)-methyltransferase from Debaryomyces hansenii (strain ATCC 36239 / CBS 767 / BCRC 21394 / JCM 1990 / NBRC 0083 / IGC 2968) (Yeast).